The sequence spans 74 residues: Conotoxin VnMEKL-0222 (74 aa).

A signal peptide spans 1–19 (MEKLTILLLVAAVLMSTQA). Positions 20–46 (LIQEKRPKEKIKFLSKRKSIPESWWEG) are excised as a propeptide. 3 disulfide bridges follow: Cys-48–Cys-62, Cys-55–Cys-66, and Cys-61–Cys-71.

This sequence belongs to the conotoxin O2 superfamily. As to expression, expressed by the venom duct.

It localises to the secreted. This Conus ventricosus (Mediterranean cone) protein is Conotoxin VnMEKL-0222.